The following is a 207-amino-acid chain: LexA repressor (207 aa).

Residues 28–48 (VREIGEAVGLASSSTVHGHLA) constitute a DNA-binding region (H-T-H motif). Residues serine 129 and lysine 167 each act as for autocatalytic cleavage activity in the active site.

Belongs to the peptidase S24 family. Homodimer.

The catalysed reaction is Hydrolysis of Ala-|-Gly bond in repressor LexA.. In terms of biological role, represses a number of genes involved in the response to DNA damage (SOS response), including recA and lexA. In the presence of single-stranded DNA, RecA interacts with LexA causing an autocatalytic cleavage which disrupts the DNA-binding part of LexA, leading to derepression of the SOS regulon and eventually DNA repair. This is LexA repressor from Geobacillus sp. (strain WCH70).